The following is a 158-amino-acid chain: Fucolectin (158 aa).

The interval 16–148 is F5/8 type C-like; the sequence is KATQSAQLRG…TSESLHLCEV (133 aa). 4 residues coordinate Ca(2+): Asn-35, Asp-38, Asn-40, and Ser-49. Cystine bridges form between Cys-50-Cys-146, Cys-82-Cys-83, and Cys-108-Cys-124. His-52 and Arg-79 together coordinate alpha-L-fucose. A Cell attachment site motif is present at residues 79-81; that stretch reads RGD. Arg-86 is a binding site for alpha-L-fucose. Ca(2+) is bound by residues Cys-146 and Glu-147.

Belongs to the fucolectin family. In terms of assembly, homotrimer.

The protein localises to the secreted. Functionally, acts as a defensive agent. Recognizes blood group fucosylated oligosaccharides including A, B, H and Lewis B-type antigens. Does not recognize Lewis A antigen and has low affinity for monovalent haptens. This chain is Fucolectin, found in Anguilla anguilla (European freshwater eel).